The primary structure comprises 307 residues: Probable GTP 3',8-cyclase (307 aa).

Positions 5 to 227 (AYGRRISSLR…RRTKYYLGGA (223 aa)) constitute a Radical SAM core domain. Position 14 (Arg-14) interacts with GTP. [4Fe-4S] cluster contacts are provided by Cys-21 and Cys-25. Tyr-27 is a binding site for S-adenosyl-L-methionine. A [4Fe-4S] cluster-binding site is contributed by Cys-28. Lys-61 provides a ligand contact to GTP. Gly-65 serves as a coordination point for S-adenosyl-L-methionine. A GTP-binding site is contributed by Thr-89. Ser-113 provides a ligand contact to S-adenosyl-L-methionine. Lys-151 lines the GTP pocket. [4Fe-4S] cluster is bound by residues Cys-241 and Cys-244. GTP is bound at residue 246–248 (RLR). Position 258 (Cys-258) interacts with [4Fe-4S] cluster.

Belongs to the radical SAM superfamily. MoaA family. The cofactor is [4Fe-4S] cluster.

The enzyme catalyses GTP + AH2 + S-adenosyl-L-methionine = (8S)-3',8-cyclo-7,8-dihydroguanosine 5'-triphosphate + 5'-deoxyadenosine + L-methionine + A + H(+). The protein operates within cofactor biosynthesis; molybdopterin biosynthesis. Its function is as follows. Catalyzes the cyclization of GTP to (8S)-3',8-cyclo-7,8-dihydroguanosine 5'-triphosphate. This Methanocella arvoryzae (strain DSM 22066 / NBRC 105507 / MRE50) protein is Probable GTP 3',8-cyclase.